Reading from the N-terminus, the 249-residue chain is 5'-nucleotidase SurE (249 aa).

The a divalent metal cation site is built by aspartate 8, aspartate 9, serine 39, and asparagine 91.

Belongs to the SurE nucleotidase family. A divalent metal cation serves as cofactor.

The protein localises to the cytoplasm. It catalyses the reaction a ribonucleoside 5'-phosphate + H2O = a ribonucleoside + phosphate. Its function is as follows. Nucleotidase that shows phosphatase activity on nucleoside 5'-monophosphates. The protein is 5'-nucleotidase SurE of Vesicomyosocius okutanii subsp. Calyptogena okutanii (strain HA).